The chain runs to 109 residues: Cytochrome bo(3) ubiquinol oxidase subunit 4 (109 aa).

Over 1–17 (MSHSTDHSGASHGSVKT) the chain is Cytoplasmic. Residues 18–36 (YMTGFILSIILTVIPFWMV) traverse the membrane as a helical segment. The Periplasmic portion of the chain corresponds to 37–45 (MTGAASPAV). A helical transmembrane segment spans residues 46 to 64 (ILGTILAMAVVQVLVHLVC). Residues 65–80 (FLHMNTKSDEGWNMTA) are Cytoplasmic-facing. The chain crosses the membrane as a helical span at residues 81-99 (FVFTVLIIAILVVGSIWIM). Over 100 to 109 (WNLNYNMMMH) the chain is Periplasmic.

It belongs to the cytochrome c oxidase bacterial subunit 4 family. Heterooctamer of two A chains, two B chains, two C chains and two D chains.

It is found in the cell inner membrane. Functionally, cytochrome bo(3) ubiquinol terminal oxidase is the component of the aerobic respiratory chain of E.coli that predominates when cells are grown at high aeration. Has proton pump activity across the membrane in addition to electron transfer, pumping 2 protons/electron. This Escherichia coli O157:H7 protein is Cytochrome bo(3) ubiquinol oxidase subunit 4 (cyoD).